Consider the following 294-residue polypeptide: Very long chain fatty acid elongase 5 (294 aa).

The next 7 membrane-spanning stretches (helical) occupy residues 26 to 46, 64 to 84, 112 to 132, 141 to 161, 172 to 192, 207 to 227, and 231 to 251; these read WLLL…LLIV, ILVV…YELV, VLWW…FFIL, FLHI…MNWV, FNSF…IPAI, LVQF…PCGF, and WLYF…NFYI. Residues 261-294 form a disordered region; the sequence is AKKDPRHNGIKSVNGHSNGASHTNAVKNRKARTD. The span at 274 to 286 shows a compositional bias: polar residues; it reads NGHSNGASHTNAV.

The protein belongs to the ELO family. ELOVL5 subfamily. Expression is highest in intestine, followed by brain and heart, and lowest in gill. Also expressed in liver, spleen and muscle.

The protein resides in the endoplasmic reticulum membrane. It localises to the cell projection. It is found in the dendrite. The enzyme catalyses a very-long-chain acyl-CoA + malonyl-CoA + H(+) = a very-long-chain 3-oxoacyl-CoA + CO2 + CoA. It carries out the reaction (6Z,9Z,12Z)-octadecatrienoyl-CoA + malonyl-CoA + H(+) = (8Z,11Z,14Z)-3-oxoeicosatrienoyl-CoA + CO2 + CoA. It catalyses the reaction (9Z,12Z,15Z)-octadecatrienoyl-CoA + malonyl-CoA + H(+) = (11Z,14Z,17Z)-3-oxoeicosatrienoyl-CoA + CO2 + CoA. The catalysed reaction is (9Z)-hexadecenoyl-CoA + malonyl-CoA + H(+) = 3-oxo-(11Z)-octadecenoyl-CoA + CO2 + CoA. The enzyme catalyses (9Z)-octadecenoyl-CoA + malonyl-CoA + H(+) = 3-oxo-(11Z)-eicosenoyl-CoA + CO2 + CoA. It carries out the reaction (11Z)-octadecenoyl-CoA + malonyl-CoA + H(+) = 3-oxo-(13Z)-eicosenoyl-CoA + CO2 + CoA. It catalyses the reaction (9Z,12Z)-octadecadienoyl-CoA + malonyl-CoA + H(+) = (11Z,14Z)-3-oxoicosa-11,14-dienoyl-CoA + CO2 + CoA. The catalysed reaction is (6Z,9Z,12Z,15Z)-octadecatetraenoyl-CoA + malonyl-CoA + H(+) = (8Z,11Z,14Z,17Z)-3-oxoicosatetraenoyl-CoA + CO2 + CoA. The enzyme catalyses (5Z,8Z,11Z,14Z)-eicosatetraenoyl-CoA + malonyl-CoA + H(+) = (7Z,10Z,13Z,16Z)-3-oxodocosatetraenoyl-CoA + CO2 + CoA. It carries out the reaction (5Z,8Z,11Z,14Z,17Z)-eicosapentaenoyl-CoA + malonyl-CoA + H(+) = 3-oxo-(7Z,10Z,13Z,16Z,19Z)-docosapentaenoyl-CoA + CO2 + CoA. It functions in the pathway lipid metabolism; polyunsaturated fatty acid biosynthesis. Functionally, catalyzes the first and rate-limiting reaction of the four reactions that constitute the long-chain fatty acids elongation cycle. This endoplasmic reticulum-bound enzymatic process allows the addition of 2 carbons to the chain of long- and very long-chain fatty acids (VLCFAs) per cycle. Condensing enzyme that acts specifically toward polyunsaturated acyl-CoA with the higher activity toward C18:3(n-6) acyl-CoA. May participate in the production of monounsaturated and of polyunsaturated VLCFAs of different chain lengths that are involved in multiple biological processes as precursors of membrane lipids and lipid mediators. In conditions where the essential linoleic and alpha linoleic fatty acids are lacking it is also involved in the synthesis of Mead acid from oleic acid. In Tachysurus fulvidraco (Yellow catfish), this protein is Very long chain fatty acid elongase 5.